A 180-amino-acid polypeptide reads, in one-letter code: Alkyl hydroperoxide reductase AhpD (180 aa).

C131 (proton donor) is an active-site residue. C131 and C134 are oxidised to a cystine. Catalysis depends on C134, which acts as the Cysteine sulfenic acid (-SOH) intermediate.

Belongs to the AhpD family.

It catalyses the reaction N(6)-[(R)-dihydrolipoyl]-L-lysyl-[lipoyl-carrier protein] + a hydroperoxide = N(6)-[(R)-lipoyl]-L-lysyl-[lipoyl-carrier protein] + an alcohol + H2O. Its function is as follows. Antioxidant protein with alkyl hydroperoxidase activity. Required for the reduction of the AhpC active site cysteine residues and for the regeneration of the AhpC enzyme activity. This Hyphomonas neptunium (strain ATCC 15444) protein is Alkyl hydroperoxide reductase AhpD.